A 148-amino-acid polypeptide reads, in one-letter code: UPF0134 protein MPN_410 (148 aa).

It belongs to the UPF0134 family.

The polypeptide is UPF0134 protein MPN_410 (Mycoplasma pneumoniae (strain ATCC 29342 / M129 / Subtype 1) (Mycoplasmoides pneumoniae)).